The primary structure comprises 323 residues: Mas-related G-protein coupled receptor member X1 (323 aa).

Over 1–30 (MDPTISSLSTESTTLNKTGHPSCRPILTLS) the chain is Extracellular. Residue N16 is glycosylated (N-linked (GlcNAc...) asparagine). Residues 31 to 51 (FLVPIITLLGLAGNTIVLWLL) form a helical membrane-spanning segment. Topologically, residues 52 to 59 (GFRMRRKA) are cytoplasmic. The chain crosses the membrane as a helical span at residues 60–80 (ISVYVLNLSLADSFFLCCHFI). The Extracellular portion of the chain corresponds to 81–100 (DSLMRIMNFYGIYAHKLSKE). The helical transmembrane segment at 101 to 121 (ILGNAAIIPYISGLSILSAIS) threads the bilayer. The Cytoplasmic portion of the chain corresponds to 122 to 143 (TERCLSVLWPIWYHCHRPRNMS). Residues 144–164 (AIICVLIWVLSFLMGILDWFF) traverse the membrane as a helical segment. Topologically, residues 165 to 180 (SGFLGETHHHLWKNVD) are extracellular. The chain crosses the membrane as a helical span at residues 181–201 (FIVTAFLIFLFMLLFGSSLAL). Residues 202–226 (LVRILCGSRRKPLSRLYVTISLTVM) are Cytoplasmic-facing. The helical transmembrane segment at 227 to 247 (VYLICGLPLGLYLFLLYWFGI) threads the bilayer. Topologically, residues 248–258 (HLHYPFCHIYQ) are extracellular. Residues 259–279 (VTVLLSCVNSSANPIIYFLVG) traverse the membrane as a helical segment. Topologically, residues 280 to 323 (SFRHRKKHRSLKMVLKRALEETPEEDEYTDSHVQKPTEISERRC) are cytoplasmic.

Belongs to the G-protein coupled receptor 1 family. Mas subfamily. Uniquely localized in a subset of small dorsal root and trigeminal sensory neurons. Associated preferentially with IB4 class of small-diameter somatosensory afferents (also known as nociceptors).

It localises to the cell membrane. Functionally, orphan receptor activated by neuropeptides terminating in Arg-Phe or Arg-Phe-amide. Mediates its action by association with G proteins that activate a phosphatidylinositol-calcium second messenger system. Its effect is mediated by G(q) and G(11) proteins. May regulate the function of nociceptive neurons by modulation of pain perception. In Rattus norvegicus (Rat), this protein is Mas-related G-protein coupled receptor member X1 (Mrgprx1).